Here is a 254-residue protein sequence, read N- to C-terminus: Proline-rich protein 23A3 (254 aa).

Disordered regions lie at residues 1–50, 161–196, and 212–254; these read MLRT…LEAP, ASPPDDQANGNFSSIPGVPSPLSQDQVPGPSTGAEQ, and PFPG…LVYE. Low complexity predominate over residues 35–50; that stretch reads EPACPEPLAQPELEAP. Over residues 214–241 the composition is skewed to pro residues; the sequence is PGSPLQPLPPSPSRNPQEQLPPCPPCSP. Over residues 243–254 the composition is skewed to basic residues; that stretch reads APRRARKRLVYE.

This sequence belongs to the PRR23 family.

The sequence is that of Proline-rich protein 23A3 from Mus musculus (Mouse).